Consider the following 416-residue polypeptide: Calreticulin (416 aa).

Residues methionine 1–alanine 25 form the signal peptide. Asparagine 57 is a glycosylation site (N-linked (GlcNAc...) asparagine). An intrachain disulfide couples cysteine 111 to cysteine 143. Residues tyrosine 115, lysine 117, tyrosine 134, and aspartate 141 each contribute to the an alpha-D-glucoside site. An N-linked (GlcNAc...) asparagine glycan is attached at asparagine 157. A run of 7 repeats spans residues lysine 197 to leucine 208, aspartate 216 to aspartate 227, aspartate 233 to aspartate 244, aspartate 251 to aspartate 262, glycine 266 to proline 276, glycine 280 to proline 290, and glycine 294 to proline 304. The interval lysine 197–aspartate 262 is 4 X approximate repeats. The span at proline 217 to glycine 241 shows a compositional bias: basic and acidic residues. A disordered region spans residues proline 217–proline 281. Residues glycine 266–proline 304 are 3 X approximate repeats. Glutamate 324 serves as a coordination point for an alpha-D-glucoside. Residues glutamate 351–proline 381 are compositionally biased toward basic and acidic residues. Residues glutamate 351–leucine 416 are disordered. A compositionally biased stretch (acidic residues) spans valine 382 to aspartate 400. A compositionally biased stretch (basic and acidic residues) spans aspartate 401–leucine 416. Residues histidine 413 to leucine 416 carry the Prevents secretion from ER motif.

The protein belongs to the calreticulin family.

The protein localises to the endoplasmic reticulum lumen. In terms of biological role, molecular calcium-binding chaperone promoting folding, oligomeric assembly and quality control in the ER via the calreticulin/calnexin cycle. This lectin may interact transiently with almost all of the monoglucosylated glycoproteins that are synthesized in the ER. The protein is Calreticulin of Beta vulgaris (Sugar beet).